A 593-amino-acid polypeptide reads, in one-letter code: Glutamyl-tRNA(Gln) amidotransferase subunit B, mitochondrial (593 aa).

The transit peptide at 1 to 49 (MLRPWLRQSTRAARSLPCCQCPRPYSSRLPTLTSPSSSVRRLQTSASES) directs the protein to the mitochondrion. Residues 27 to 42 (SRLPTLTSPSSSVRRL) show a composition bias toward low complexity. The tract at residues 27 to 80 (SRLPTLTSPSSSVRRLQTSASESQDRVPLRKQLKQNAKALKAEKRQRRESEEAS) is disordered. A compositionally biased stretch (basic and acidic residues) spans 66 to 80 (LKAEKRQRRESEEAS).

Belongs to the GatB/GatE family. GatB subfamily. Subunit of the heterotrimeric GatCAB amidotransferase (AdT) complex, composed of A, B and C subunits.

It localises to the mitochondrion. The catalysed reaction is L-glutamyl-tRNA(Gln) + L-glutamine + ATP + H2O = L-glutaminyl-tRNA(Gln) + L-glutamate + ADP + phosphate + H(+). Allows the formation of correctly charged Gln-tRNA(Gln) through the transamidation of misacylated Glu-tRNA(Gln) in the mitochondria. The reaction takes place in the presence of glutamine and ATP through an activated gamma-phospho-Glu-tRNA(Gln). The sequence is that of Glutamyl-tRNA(Gln) amidotransferase subunit B, mitochondrial from Aspergillus oryzae (strain ATCC 42149 / RIB 40) (Yellow koji mold).